Here is a 294-residue protein sequence, read N- to C-terminus: NAD kinase (294 aa).

Asp-74 functions as the Proton acceptor in the catalytic mechanism. NAD(+) is bound by residues Asp-74–Gly-75, Asn-148–Glu-149, His-159, Arg-176, Asp-178, and Thr-189–Ser-194.

It belongs to the NAD kinase family. Requires a divalent metal cation as cofactor.

It is found in the cytoplasm. It carries out the reaction NAD(+) + ATP = ADP + NADP(+) + H(+). In terms of biological role, involved in the regulation of the intracellular balance of NAD and NADP, and is a key enzyme in the biosynthesis of NADP. Catalyzes specifically the phosphorylation on 2'-hydroxyl of the adenosine moiety of NAD to yield NADP. The sequence is that of NAD kinase from Pseudoalteromonas translucida (strain TAC 125).